The sequence spans 420 residues: Probable pectate lyase C (420 aa).

Residues 1–20 form the signal peptide; the sequence is MKLSAPLLVSLAAFSQAVTA. Residues N49, N165, and N202 are each glycosylated (N-linked (GlcNAc...) asparagine). The active site involves R205. The 36-residue stretch at 262-297 folds into the EF-hand domain; the sequence is NANFHGYVDNNYYDPDKDGQLDGSELGVSSSNYGGM. 5 residues coordinate Ca(2+): D275, D277, D279, Q281, and E286. The tract at residues 357 to 395 is disordered; the sequence is ATMGGPGTLNGGTPAKDTDGDGIPDEAEKQLGTDPNTND. An N-linked (GlcNAc...) asparagine glycan is attached at N394.

This sequence belongs to the polysaccharide lyase 1 family. Ca(2+) is required as a cofactor.

It localises to the secreted. The enzyme catalyses Eliminative cleavage of (1-&gt;4)-alpha-D-galacturonan to give oligosaccharides with 4-deoxy-alpha-D-galact-4-enuronosyl groups at their non-reducing ends.. Its function is as follows. Pectinolytic enzyme consist of four classes of enzymes: pectin lyase, polygalacturonase, pectin methylesterase and rhamnogalacturonase. Among pectinolytic enzymes, pectin lyase is the most important in depolymerization of pectin, since it cleaves internal glycosidic bonds of highly methylated pectins. Favors pectate, the anion, over pectin, the methyl ester. This Neosartorya fischeri (strain ATCC 1020 / DSM 3700 / CBS 544.65 / FGSC A1164 / JCM 1740 / NRRL 181 / WB 181) (Aspergillus fischerianus) protein is Probable pectate lyase C (plyC).